The chain runs to 809 residues: Phenylalanine--tRNA ligase beta subunit (809 aa).

In terms of domain architecture, tRNA-binding spans Ala39 to Arg154. The 76-residue stretch at Pro405–Ala480 folds into the B5 domain. Asp458, Asp464, Glu467, and Glu468 together coordinate Mg(2+). In terms of domain architecture, FDX-ACB spans Ser707–Arg808.

It belongs to the phenylalanyl-tRNA synthetase beta subunit family. Type 1 subfamily. Tetramer of two alpha and two beta subunits. The cofactor is Mg(2+).

Its subcellular location is the cytoplasm. It catalyses the reaction tRNA(Phe) + L-phenylalanine + ATP = L-phenylalanyl-tRNA(Phe) + AMP + diphosphate + H(+). This is Phenylalanine--tRNA ligase beta subunit from Burkholderia lata (strain ATCC 17760 / DSM 23089 / LMG 22485 / NCIMB 9086 / R18194 / 383).